The following is a 510-amino-acid chain: GTPase Der (510 aa).

2 consecutive EngA-type G domains span residues 4 to 168 (PVVA…AEKM) and 222 to 395 (IKIA…ACAT). GTP is bound by residues 10-17 (GRPNVGKS), 57-61 (DTGGI), 120-123 (NKTD), 228-235 (GRPNVGKS), 275-279 (DTAGV), and 340-343 (NKWD). In terms of domain architecture, KH-like spans 396-480 (QKMTTSMLTR…PIRLLFQEGN (85 aa)).

Belongs to the TRAFAC class TrmE-Era-EngA-EngB-Septin-like GTPase superfamily. EngA (Der) GTPase family. In terms of assembly, associates with the 50S ribosomal subunit.

GTPase that plays an essential role in the late steps of ribosome biogenesis. The polypeptide is GTPase Der (Pasteurella multocida (strain Pm70)).